Consider the following 94-residue polypeptide: Large ribosomal subunit protein eL42 (94 aa).

4 residues coordinate Zn(2+): C11, C14, C71, and C74. Residues 11-74 (CPFCKRHTIH…LDLRFRCTVC (64 aa)) form a C4-type zinc finger.

The protein belongs to the eukaryotic ribosomal protein eL42 family. In terms of assembly, part of the 50S ribosomal subunit. Zn(2+) is required as a cofactor.

Its function is as follows. Binds to the 23S rRNA. The protein is Large ribosomal subunit protein eL42 of Pyrococcus abyssi (strain GE5 / Orsay).